We begin with the raw amino-acid sequence, 583 residues long: 2-succinyl-5-enolpyruvyl-6-hydroxy-3-cyclohexene-1-carboxylate synthase (583 aa).

This sequence belongs to the TPP enzyme family. MenD subfamily. In terms of assembly, homodimer. Mg(2+) serves as cofactor. The cofactor is Mn(2+). Thiamine diphosphate is required as a cofactor.

The catalysed reaction is isochorismate + 2-oxoglutarate + H(+) = 5-enolpyruvoyl-6-hydroxy-2-succinyl-cyclohex-3-ene-1-carboxylate + CO2. The protein operates within quinol/quinone metabolism; 1,4-dihydroxy-2-naphthoate biosynthesis; 1,4-dihydroxy-2-naphthoate from chorismate: step 2/7. It participates in quinol/quinone metabolism; menaquinone biosynthesis. Catalyzes the thiamine diphosphate-dependent decarboxylation of 2-oxoglutarate and the subsequent addition of the resulting succinic semialdehyde-thiamine pyrophosphate anion to isochorismate to yield 2-succinyl-5-enolpyruvyl-6-hydroxy-3-cyclohexene-1-carboxylate (SEPHCHC). The sequence is that of 2-succinyl-5-enolpyruvyl-6-hydroxy-3-cyclohexene-1-carboxylate synthase from Roseiflexus sp. (strain RS-1).